The sequence spans 256 residues: uncharacterized protein (256 aa).

Positions 10–64 (IRALRESRDWSLADLAAATGVSTMGLSYLERGARKPHKSTVQKVENGLGLPPGTY) constitute an HTH cro/C1-type domain. The H-T-H motif DNA-binding region spans 21–40 (LADLAAATGVSTMGLSYLER).

This is an uncharacterized protein from Mycobacterium bovis (strain ATCC BAA-935 / AF2122/97).